The following is a 513-amino-acid chain: Protein CYCLOPS (513 aa).

Disordered regions lie at residues 329–380 and 395–435; these read QGRT…STQN and DDRK…AEAK. Residues 333-347 are compositionally biased toward low complexity; that stretch reads ASGEPSQSESSAAAP. Polar residues predominate over residues 359 to 380; sequence PSNSNQTLGDSSWKQVGESTQN. 2 consecutive short sequence motifs (nuclear localization signal) follow at residues 397–400 and 421–424; these read RKRK and KKRR. The stretch at 447-513 forms a coiled coil; the sequence is MQAILKRCEN…ERILSETGKI (67 aa).

This sequence belongs to the CYCLOPS family. Forms homodimers. Interacts with CCAMK. Highly expressed in roots. Expressed in root hairs and nodules. Not detected in leaves or flowers.

Its subcellular location is the nucleus. Its function is as follows. Involved symbiotic signaling. Required for root infection by symbiotic rhizobia, infection thread (IT) formation, and nodule development. Required for proper induction of early nodulin gene expression. Probably not involved in nodule organogenesis. Involved in arbuscular mycorrhizal (AM) symbiosis. Required for fungal infection of the outer cortical cell layers, and for arbuscule development during the AM symbiosis. Acts downstream of CCAMK. Required for symbiosome formation (i.e. the release of the bacteria from the ITs) and subsequent symbiosome development. Required for the expression of the nodule-specific RPG gene, which controls proper IT growth and is essential for symbiosome formation. Acts upstream of ERN1, a transcriptional regulator required for nodulation. In Medicago truncatula (Barrel medic), this protein is Protein CYCLOPS.